We begin with the raw amino-acid sequence, 391 residues long: UPF0229 protein BCB4264_A0587 (391 aa).

The segment covering 1 to 16 (MGEENQPNYTISQENW) has biased composition (polar residues). Disordered stretches follow at residues 1–31 (MGEENQPNYTISQENWSLHRKGYDDQQRHQE) and 80–117 (HVGQGNGDSKVGDVVARDGSGGQKQKGPGKGQGAGDAA). Residues 21–31 (KGYDDQQRHQE) are compositionally biased toward basic and acidic residues. The segment covering 98-115 (GSGGQKQKGPGKGQGAGD) has biased composition (gly residues).

Belongs to the UPF0229 family.

In Bacillus cereus (strain B4264), this protein is UPF0229 protein BCB4264_A0587.